A 589-amino-acid polypeptide reads, in one-letter code: LRR receptor-like serine/threonine-protein kinase FEI 2 (589 aa).

A signal peptide spans 1-28; sequence MGICLMKRCCSWFLLISFLSALTNENEA. The Extracellular segment spans residues 29–236; that stretch reads ISPDGEALLS…TGQGGNNPKR (208 aa). LRR repeat units follow at residues 72–96, 97–120, 122–144, 145–168, and 170–193; these read TKRV…LGKL, DQLR…LGNC, ALEG…IGNL, SGLK…LGQL, and RLTK…LLAR. Residues N119 and N143 are each glycosylated (N-linked (GlcNAc...) asparagine). Residues N175, N215, and N219 are each glycosylated (N-linked (GlcNAc...) asparagine). Residues 237 to 257 traverse the membrane as a helical segment; sequence LLISASATVGGLLLVALMCFW. At 258–589 the chain is on the cytoplasmic side; sequence GCFLYKKLGR…PSDFYDSSSD (332 aa). The 273-residue stretch at 304 to 576 folds into the Protein kinase domain; sequence LNEEHIIGCG…VVQLLESEVM (273 aa). Residues 310-318 and K332 contribute to the ATP site; that span reads IGCGGFGTV. Residue S384 is modified to Phosphoserine. The active-site Proton acceptor is the D427. A phosphothreonine mark is found at T460, T461, and T466. Y474 carries the phosphotyrosine modification.

It belongs to the protein kinase superfamily. Ser/Thr protein kinase family. Interacts with the ACC synthases ACS5 and ACS9 but not ACS2, via the kinase domain. Post-translationally, autophosphorylated. In terms of tissue distribution, expressed in the root meristem and elongation zone, and in hypocotyls of etiolated seedlings.

It localises to the cell membrane. The enzyme catalyses L-seryl-[protein] + ATP = O-phospho-L-seryl-[protein] + ADP + H(+). The catalysed reaction is L-threonyl-[protein] + ATP = O-phospho-L-threonyl-[protein] + ADP + H(+). Involved in the signaling pathway that regulates cell wall function, including cellulose biosynthesis, likely via an 1-aminocyclopropane-1-carboxylic acid (ACC)-mediated signal (a precursor of ethylene). The polypeptide is LRR receptor-like serine/threonine-protein kinase FEI 2 (FEI2) (Arabidopsis thaliana (Mouse-ear cress)).